Reading from the N-terminus, the 143-residue chain is Large ribosomal subunit protein uL13c (143 aa).

This sequence belongs to the universal ribosomal protein uL13 family. Part of the 50S ribosomal subunit.

It localises to the plastid. Its subcellular location is the chloroplast. The sequence is that of Large ribosomal subunit protein uL13c from Guillardia theta (Cryptophyte).